Reading from the N-terminus, the 291-residue chain is Ubiquinone biosynthesis protein COQ4, mitochondrial (291 aa).

The transit peptide at 1 to 37 (MLGRRSVSLLRGLTELPVSSRAHTALRALSVPQTRRN) directs the protein to the mitochondrion. Residues histidine 169, aspartate 170, histidine 173, and glutamate 185 each coordinate Zn(2+). Residues 271-283 (PLNEAKEAAERRS) show a composition bias toward basic and acidic residues. The tract at residues 271–291 (PLNEAKEAAERRSKTTQNQIY) is disordered.

This sequence belongs to the COQ4 family. Component of a multi-subunit COQ enzyme complex, composed of at least COQ3, COQ4, COQ5, COQ6, COQ7 and COQ9. It depends on Zn(2+) as a cofactor.

It localises to the mitochondrion inner membrane. It catalyses the reaction a 4-hydroxy-3-methoxy-5-(all-trans-polyprenyl)benzoate + H(+) = a 2-methoxy-6-(all-trans-polyprenyl)phenol + CO2. It functions in the pathway cofactor biosynthesis; ubiquinone biosynthesis. Lyase that catalyzes the C1-decarboxylation of 4-hydroxy-3-methoxy-5-(all-trans-polyprenyl)benzoic acid into 2-methoxy-6-(all-trans-polyprenyl)phenol during ubiquinone biosynthesis. In Coprinopsis cinerea (strain Okayama-7 / 130 / ATCC MYA-4618 / FGSC 9003) (Inky cap fungus), this protein is Ubiquinone biosynthesis protein COQ4, mitochondrial.